The sequence spans 244 residues: INO80 complex subunit E (244 aa).

Residues 10 to 54 (DYKKKYRNLKRKLKFLIYEHECFQEELRKAQRKLLKVSRDKSFLL) are a coiled coil. Disordered regions lie at residues 59 to 187 (QYEN…PLTF) and 222 to 244 (FSDA…DIPE). Composition is skewed to low complexity over residues 99 to 115 (PPLG…LPPS) and 122 to 136 (ASRA…LASP). Positions 157-171 (RPKREKRPRLPRKLK) are enriched in basic residues. Glycyl lysine isopeptide (Lys-Gly) (interchain with G-Cter in SUMO2) cross-links involve residues Lys159 and Lys171. The segment covering 230-244 (DALDGDDDLVIDIPE) has biased composition (acidic residues).

Component of the chromatin remodeling INO80 complex; specifically part of a complex module associated with the N-terminus of INO80.

The protein resides in the nucleus. In terms of biological role, putative regulatory component of the chromatin remodeling INO80 complex which is involved in transcriptional regulation, DNA replication and probably DNA repair. The protein is INO80 complex subunit E (INO80E) of Bos taurus (Bovine).